The primary structure comprises 81 residues: Small ribosomal subunit protein bS18 (81 aa).

Belongs to the bacterial ribosomal protein bS18 family. Part of the 30S ribosomal subunit. Forms a tight heterodimer with protein bS6.

Functionally, binds as a heterodimer with protein bS6 to the central domain of the 16S rRNA, where it helps stabilize the platform of the 30S subunit. This is Small ribosomal subunit protein bS18 from Syntrophobacter fumaroxidans (strain DSM 10017 / MPOB).